Consider the following 70-residue polypeptide: Small ribosomal subunit protein bS21 (70 aa).

It belongs to the bacterial ribosomal protein bS21 family.

The protein is Small ribosomal subunit protein bS21 of Nitratiruptor sp. (strain SB155-2).